The chain runs to 135 residues: Interleukin-4 (135 aa).

The signal sequence occupies residues 1 to 24; that stretch reads MGLTSQLIPVLVCLLACTSHFVHG. Intrachain disulfides connect C27-C135, C48-C85, and C70-C105. 2 N-linked (GlcNAc...) asparagine glycosylation sites follow: N62 and N96.

Belongs to the IL-4/IL-13 family.

The protein resides in the secreted. Participates in at least several B-cell activation processes as well as of other cell types. It is a costimulator of DNA-synthesis. It induces the expression of class II MHC molecules on resting B-cells. It enhances both secretion and cell surface expression of IgE and IgG1. It also regulates the expression of the low affinity Fc receptor for IgE (CD23) on both lymphocytes and monocytes. Positively regulates IL31RA expression in macrophages. Stimulates autophagy in dendritic cells by interfering with mTORC1 signaling and through the induction of RUFY4. This chain is Interleukin-4 (IL4), found in Cervus elaphus (Red deer).